A 242-amino-acid chain; its full sequence is uncharacterized protein (242 aa).

This is an uncharacterized protein from Bacillus subtilis (strain 168).